The following is a 3916-amino-acid chain: Fusarin C synthetase (3916 aa).

The Ketosynthase family 3 (KS3) domain occupies 9 to 440; that stretch reads KEPIAIIGTS…GTNVHAIIEQ (432 aa). Active-site for beta-ketoacyl synthase activity residues include cysteine 182, histidine 319, and histidine 360. The interval 548–869 is malonyl-CoA:ACP transacylase (MAT) domain; it reads VFTGQGAQWP…VTRNIHDVEA (322 aa). The segment at 935-1068 is N-terminal hotdog fold; that stretch reads HPLLGARSVE…GQLRVEFSSL (134 aa). The dehydratase (DH) domain stretch occupies residues 935–1228; it reads HPLLGARSVE…GLTCTSLLRP (294 aa). In terms of domain architecture, PKS/mFAS DH spans 935–1231; the sequence is HPLLGARSVE…CTSLLRPGPS (297 aa). Histidine 967 serves as the catalytic Proton acceptor; for dehydratase activity. The segment at 1084–1231 is C-terminal hotdog fold; that stretch reads LTSVDMERFY…CTSLLRPGPS (148 aa). Aspartate 1141 (proton donor; for dehydratase activity) is an active-site residue. Residues 1350-1584 form a C-methyltransferase (CMeT) domain region; the sequence is VGENLPAVVR…YMTSVMLSQA (235 aa). Residues 2092-2266 are ketoreductase (KR) domain 1; the sequence is TYLLIGFTGG…AASVMHIGMV (175 aa). In terms of domain architecture, Carrier 1 spans 2372–2449; sequence EILAVVEEEF…ELCSTVVSHL (78 aa). Residue serine 2409 is modified to O-(pantetheine 4'-phosphoryl)serine. The disordered stretch occupies residues 2482-2511; the sequence is ASPTENEPFTIRNSPNSTQVTSESGVDEET. Over residues 2486–2505 the composition is skewed to polar residues; that stretch reads ENEPFTIRNSPNSTQVTSES. Positions 2522–2806 are condensation; the sequence is PLSFAQERLW…VNLLPLRLKL (285 aa). The adenylation stretch occupies residues 2973–3385; it reads FEKCVVNQPD…RIAGDSQIKL (413 aa). The Carrier 2 domain occupies 3493-3570; sequence KPLTETQERL…EMAAKIDGFT (78 aa). Serine 3530 is modified (O-(pantetheine 4'-phosphoryl)serine). Positions 3612–3833 are thiolester reductase (R) domain; that stretch reads LTGATGFLGV…DFVPVDVVAA (222 aa).

It in the C-terminal section; belongs to the NRP synthetase family.

Its pathway is mycotoxin biosynthesis. In terms of biological role, fusarin C synthetase; part of the gene cluster that mediates the biosynthesis of the mycotoxin fusarin C. Within the cluster, FUS1, FUS2, FUS8 and FUS9 are sufficient for fusarin production. The roles of the other FUS members are yet undetermined. The fusarin C synthetase FUS1 is responsible for the condensation of one acetyl-coenzyme A (CoA) unit with six malonyl-CoA units and the amide linkage of the arising heptaketide and homoserine, subsequently releasing the first intermediate, prefusarin, as an alcohol with an open ring structure. The cytochrome P450 monooxygenase FUS8 participates in multiple oxidation processes at carbon C-20 and is able to use the FUS1 product as substrate, resulting in formation of 20-hydroxy-prefusarin. This reaction seems to be essential before the 2-pyrrolidone ring closure can be catalyzed by FUS2, generating 20-hydroxy-fusarin. FUS8 is able to further oxidizes carbon C-20 after ring closure, resulting in the formation of carboxy-fusarin C. As the last step, FUS9 methylates the hydroxyl group at C-21 to generate fusarin C. Fusarin C can then rearrange to epi-fusarin C, the (z)-isomers, and fusarin A and fusarin D. This chain is Fusarin C synthetase, found in Gibberella moniliformis (strain M3125 / FGSC 7600) (Maize ear and stalk rot fungus).